The following is a 568-amino-acid chain: MRVTRFPLSTTRETPADAEIVSHQLMLRAGMIRRLSSGLYTWLPLGLRVLQKVERIVREEMNRAGALEVLMPAVQPAELWQESGRWEKYGPELLRIRDRHDREGCFGPTHEEVITDLFRREIRSYRQLPVNYYQIQTKFRDEIRPRFGVMRAREFLMKDAYSFHLDDDDLRAEYQRMHEAYCRIFQRTGLAFRPVEADTGAIGGSVSHEFMVLADSGEDAIAVCEASGYAANVELAPAVAPTEPRPAPQAERAEVATPGQRTIAEVAAYLGLPEARNLKTLLVEGADGGLVALLLRGDHELNELKAEKHPAVKAPLTFAEAERVERQLGCPFGSLGPVGLTGVTLIADHAAAHLADFACGANREGYHLTGVNWGRDLPEPETADLREVTAGDPSPDGEGTLTLRRGIEVGHIFQLGTTYSEAMGASVLDEQGQERTVTMGCYGIGVSRVVAAAIEQNHDDRGICWPAPIAPFQVALVAIKAEDPAVAEAAEALYADLTASGIDVLYDDRDARPGVKFADMELIGIPHRVVVSPRAIQEGSVEYKGRQDADPTHVPRAEIVTWLKNRLT.

It belongs to the class-II aminoacyl-tRNA synthetase family. ProS type 1 subfamily. As to quaternary structure, homodimer.

It localises to the cytoplasm. It catalyses the reaction tRNA(Pro) + L-proline + ATP = L-prolyl-tRNA(Pro) + AMP + diphosphate. In terms of biological role, catalyzes the attachment of proline to tRNA(Pro) in a two-step reaction: proline is first activated by ATP to form Pro-AMP and then transferred to the acceptor end of tRNA(Pro). As ProRS can inadvertently accommodate and process non-cognate amino acids such as alanine and cysteine, to avoid such errors it has two additional distinct editing activities against alanine. One activity is designated as 'pretransfer' editing and involves the tRNA(Pro)-independent hydrolysis of activated Ala-AMP. The other activity is designated 'posttransfer' editing and involves deacylation of mischarged Ala-tRNA(Pro). The misacylated Cys-tRNA(Pro) is not edited by ProRS. This Halorhodospira halophila (strain DSM 244 / SL1) (Ectothiorhodospira halophila (strain DSM 244 / SL1)) protein is Proline--tRNA ligase.